We begin with the raw amino-acid sequence, 89 residues long: Small ribosomal subunit protein uS19 (89 aa).

It belongs to the universal ribosomal protein uS19 family.

Protein S19 forms a complex with S13 that binds strongly to the 16S ribosomal RNA. The polypeptide is Small ribosomal subunit protein uS19 (Vesicomyosocius okutanii subsp. Calyptogena okutanii (strain HA)).